The following is a 908-amino-acid chain: DNA mismatch repair protein MutS (908 aa).

An ATP-binding site is contributed by 659–666 (GPNMAGKS).

It belongs to the DNA mismatch repair MutS family.

This protein is involved in the repair of mismatches in DNA. It is possible that it carries out the mismatch recognition step. This protein has a weak ATPase activity. The polypeptide is DNA mismatch repair protein MutS (Parvibaculum lavamentivorans (strain DS-1 / DSM 13023 / NCIMB 13966)).